Here is a 274-residue protein sequence, read N- to C-terminus: Ribosomal RNA small subunit methyltransferase A (274 aa).

Residues H15, L17, G42, E64, D89, and N108 each coordinate S-adenosyl-L-methionine.

This sequence belongs to the class I-like SAM-binding methyltransferase superfamily. rRNA adenine N(6)-methyltransferase family. RsmA subfamily.

It localises to the cytoplasm. The catalysed reaction is adenosine(1518)/adenosine(1519) in 16S rRNA + 4 S-adenosyl-L-methionine = N(6)-dimethyladenosine(1518)/N(6)-dimethyladenosine(1519) in 16S rRNA + 4 S-adenosyl-L-homocysteine + 4 H(+). Its function is as follows. Specifically dimethylates two adjacent adenosines (A1518 and A1519) in the loop of a conserved hairpin near the 3'-end of 16S rRNA in the 30S particle. May play a critical role in biogenesis of 30S subunits. The polypeptide is Ribosomal RNA small subunit methyltransferase A (Prochlorococcus marinus (strain MIT 9215)).